The chain runs to 229 residues: Ribonuclease 3 (229 aa).

One can recognise an RNase III domain in the interval 7–132; it reads LKAFEGRIGH…VIAAVYLDAG (126 aa). Residue Glu-45 coordinates Mg(2+). Asp-49 is an active-site residue. Mg(2+) contacts are provided by Asp-118 and Glu-121. Residue Glu-121 is part of the active site. The DRBM domain maps to 157–226; that stretch reads DAKTALQEWA…ARALLARMEA (70 aa).

The protein belongs to the ribonuclease III family. Homodimer. Requires Mg(2+) as cofactor.

It is found in the cytoplasm. The enzyme catalyses Endonucleolytic cleavage to 5'-phosphomonoester.. Functionally, digests double-stranded RNA. Involved in the processing of primary rRNA transcript to yield the immediate precursors to the large and small rRNAs (23S and 16S). Processes some mRNAs, and tRNAs when they are encoded in the rRNA operon. Processes pre-crRNA and tracrRNA of type II CRISPR loci if present in the organism. This is Ribonuclease 3 from Cereibacter sphaeroides (strain ATCC 17029 / ATH 2.4.9) (Rhodobacter sphaeroides).